The sequence spans 356 residues: uncharacterized protein (356 aa).

This sequence belongs to the NAD(P)-dependent epimerase/dehydratase family. NAD(+) is required as a cofactor. The cofactor is NADP(+).

Functionally, putative nucleotide sugar epimerase/dehydrogenase. This is an uncharacterized protein from Sinorhizobium fredii (strain NBRC 101917 / NGR234).